Here is a 723-residue protein sequence, read N- to C-terminus: Homeobox protein HAT3.1 (723 aa).

Residues 1-10 (MYKAVSKRVT) are compositionally biased toward basic residues. 2 disordered regions span residues 1-94 (MYKA…GSHR) and 135-173 (KRAQ…QVRE). The segment covering 11-23 (RSSGSGLKQTNVD) has biased composition (polar residues). A compositionally biased stretch (basic and acidic residues) spans 58 to 83 (LHHEIMDHGKGNEEQKPTPQTVKKDS). Residues 265 to 322 (DIFCAKCGSKDLSVDNDIILCDGFCDRGFHQYCLEPPLRKEDIPPDDEGWLCPGCDCK) form a PHD-type zinc finger. Disordered stretches follow at residues 357 to 628 (GGQN…KTQR) and 680 to 723 (VEKL…RRRK). Acidic residues predominate over residues 365–407 (LPSDDSDDEEYDPDCLNDNENDEDGSDDNEESENEDGSSDETE). Over residues 417–427 (ESFKEGKDIMK) the composition is skewed to basic and acidic residues. The segment covering 435–453 (DDSEDDDYDPDAPTCDDDK) has biased composition (acidic residues). 2 stretches are compositionally biased toward basic and acidic residues: residues 518–530 (RNVE…KLYD) and 547–556 (DKTARMGKED). The span at 580–589 (KKLIRKSKRA) shows a compositional bias: basic residues. Positions 614–673 (SSSSACKQTDPKTQRLYISFQENQYPDKATKESLAKELQMTVKQVNNWFKHRRWSINSKP) form a DNA-binding region, homeobox. Basic and acidic residues predominate over residues 680–690 (VEKLKTGKEGE). Over residues 695-705 (VAGSSKQTMET) the composition is skewed to polar residues.

This sequence belongs to the PHD-associated homeobox family. Primarily detected in root tissue.

Its subcellular location is the nucleus. Binds only to large DNA fragments. Recognizes a DNA fragment carrying 8 copies of box7 motif of the light-induced cab-E promoter of Nicotiana plumbaginifolia. Also recognizes the box7m1 motif. This chain is Homeobox protein HAT3.1 (HAT3.1), found in Arabidopsis thaliana (Mouse-ear cress).